The chain runs to 200 residues: Small ribosomal subunit protein uS4 (200 aa).

The tract at residues 22–42 (TGKELEKRPYAPGPHGPNQRK) is disordered. One can recognise an S4 RNA-binding domain in the interval 92-152 (ARLDNLVYRM…EKSNNLVVVK (61 aa)).

It belongs to the universal ribosomal protein uS4 family. Part of the 30S ribosomal subunit. Contacts protein S5. The interaction surface between S4 and S5 is involved in control of translational fidelity.

One of the primary rRNA binding proteins, it binds directly to 16S rRNA where it nucleates assembly of the body of the 30S subunit. Functionally, with S5 and S12 plays an important role in translational accuracy. This Bacillus thuringiensis subsp. konkukian (strain 97-27) protein is Small ribosomal subunit protein uS4.